The chain runs to 131 residues: Conotoxin Cal8.2 (131 aa).

The first 19 residues, 1–19, serve as a signal peptide directing secretion; it reads MKLLLTLLLGSALMCITLA. Positions 20–38 are excised as a propeptide; sequence DECGLGTHRPVKEVIDNVR.

Post-translationally, contains 4 disulfide bonds. As to expression, expressed by the venom duct.

It localises to the secreted. Functionally, probable neurotoxin with unknown target. Possibly targets ion channels. This Californiconus californicus (California cone) protein is Conotoxin Cal8.2.